A 157-amino-acid chain; its full sequence is Small ribosomal subunit protein uS7 (157 aa).

This sequence belongs to the universal ribosomal protein uS7 family. In terms of assembly, part of the 30S ribosomal subunit. Contacts proteins S9 and S11.

One of the primary rRNA binding proteins, it binds directly to 16S rRNA where it nucleates assembly of the head domain of the 30S subunit. Is located at the subunit interface close to the decoding center, probably blocks exit of the E-site tRNA. The polypeptide is Small ribosomal subunit protein uS7 (Chlamydia abortus (strain DSM 27085 / S26/3) (Chlamydophila abortus)).